The following is a 315-amino-acid chain: Fructose-1,6-bisphosphatase class 1 (315 aa).

Residues E90, D111, L113, and D114 each contribute to the Mg(2+) site. Residues 114–117, Y222, and K253 contribute to the substrate site; that span reads DGSS. Mg(2+) is bound at residue E259.

This sequence belongs to the FBPase class 1 family. Homotetramer. Mg(2+) serves as cofactor.

Its subcellular location is the cytoplasm. It catalyses the reaction beta-D-fructose 1,6-bisphosphate + H2O = beta-D-fructose 6-phosphate + phosphate. It functions in the pathway carbohydrate biosynthesis; gluconeogenesis. This chain is Fructose-1,6-bisphosphatase class 1, found in Trichlorobacter lovleyi (strain ATCC BAA-1151 / DSM 17278 / SZ) (Geobacter lovleyi).